The primary structure comprises 1188 residues: Phospholipid-transporting ATPase IB (1188 aa).

Residues Met1 to Arg94 lie on the Cytoplasmic side of the membrane. Residue Thr45 is modified to Phosphothreonine. A helical membrane pass occupies residues Ala95–Thr115. The Extracellular segment spans residues Gly116–Thr119. Residues Thr120–Phe140 traverse the membrane as a helical segment. At Lys141–Gln316 the chain is on the cytoplasmic side. Residues Ile317–Tyr337 form a helical membrane-spanning segment. At Trp338 to Leu364 the chain is on the extracellular side. Residues Thr365–Val385 form a helical membrane-spanning segment. Residues Lys386–Val887 are Cytoplasmic-facing. The 4-aspartylphosphate intermediate role is filled by Asp428. 12 residues coordinate ATP: Asp428, Lys429, Thr430, Glu528, Phe569, Lys592, Arg625, Thr705, Gly706, Asp707, Arg795, and Lys801. Residue Asp428 participates in Mg(2+) binding. Thr430 serves as a coordination point for Mg(2+). A Mg(2+)-binding site is contributed by Asp821. Positions 824 and 825 each coordinate ATP. Mg(2+) is bound at residue Asp825. A helical transmembrane segment spans residues Val888–Phe908. The Extracellular segment spans residues Glu909–Arg910. The helical transmembrane segment at Trp911–Phe931 threads the bilayer. Residues Glu932–Lys959 are Cytoplasmic-facing. A helical membrane pass occupies residues Val960–Met980. Residues Lys981–Tyr997 lie on the Extracellular side of the membrane. A helical membrane pass occupies residues Leu998–Leu1018. Topologically, residues Glu1019–His1028 are cytoplasmic. A helical transmembrane segment spans residues Leu1029 to Trp1049. The Extracellular segment spans residues Pro1050 to Thr1063. A helical transmembrane segment spans residues Met1064–Ile1084. The Cytoplasmic portion of the chain corresponds to Glu1085–Lys1188. Residues Ser1162 to Lys1188 form a disordered region. Residues Gln1163–Lys1182 are compositionally biased toward basic and acidic residues.

It belongs to the cation transport ATPase (P-type) (TC 3.A.3) family. Type IV subfamily. In terms of assembly, component of a P4-ATPase flippase complex which consists of a catalytic alpha subunit and an accessory beta subunit. Interacts with TMEM30A to form a flippase complex. Mg(2+) is required as a cofactor. As to expression, strongly expressed in the brain, cerebellum, retina and testis.

The protein localises to the membrane. The protein resides in the golgi apparatus membrane. It is found in the endosome membrane. Its subcellular location is the cell membrane. It localises to the photoreceptor outer segment membrane. The protein localises to the photoreceptor inner segment membrane. The catalysed reaction is ATP + H2O + phospholipidSide 1 = ADP + phosphate + phospholipidSide 2.. It catalyses the reaction a 1,2-diacyl-sn-glycero-3-phospho-L-serine(out) + ATP + H2O = a 1,2-diacyl-sn-glycero-3-phospho-L-serine(in) + ADP + phosphate + H(+). The enzyme catalyses a 1,2-diacyl-sn-glycero-3-phosphoethanolamine(in) + ATP + H2O = a 1,2-diacyl-sn-glycero-3-phosphoethanolamine(out) + ADP + phosphate + H(+). In terms of biological role, catalytic component of a P4-ATPase flippase complex which catalyzes the hydrolysis of ATP coupled to the transport of aminophospholipids from the outer to the inner leaflet of various membranes and ensures the maintenance of asymmetric distribution of phospholipids. Able to translocate phosphatidylserine, but not phosphatidylcholine. Phospholipid translocation also seems to be implicated in vesicle formation and in uptake of lipid signaling molecules. Reconstituted to liposomes, the ATP8A2:TMEM30A flippase complex predominantly transports phosphatidylserine (PS) and to a lesser extent phosphatidylethanolamine (PE). Phospholipid translocation is not associated with a countertransport of an inorganic ion or other charged substrate from the cytoplasmic side toward the exoplasm in connection with the phosphorylation from ATP. ATP8A2:TMEM30A may be involved in regulation of neurite outgrowth. Proposed to function in the generation and maintenance of phospholipid asymmetry in photoreceptor disk membranes and neuronal axon membranes. May be involved in vesicle trafficking in neuronal cells. Required for normal visual and auditory function; involved in photoreceptor and inner ear spiral ganglion cell survival. The chain is Phospholipid-transporting ATPase IB from Homo sapiens (Human).